The following is a 197-amino-acid chain: Probable GTP-binding protein EngB (197 aa).

Positions 26-197 (DLPEIALAGR…TSWDAILESL (172 aa)) constitute an EngB-type G domain. Residues 34-41 (GRSNVGKS), 61-65 (GKTQS), 79-82 (DVPG), 146-149 (TKAD), and 178-180 (FSS) contribute to the GTP site. Residues Ser-41 and Thr-63 each coordinate Mg(2+).

Belongs to the TRAFAC class TrmE-Era-EngA-EngB-Septin-like GTPase superfamily. EngB GTPase family. It depends on Mg(2+) as a cofactor.

Functionally, necessary for normal cell division and for the maintenance of normal septation. The protein is Probable GTP-binding protein EngB of Streptococcus mutans serotype c (strain ATCC 700610 / UA159).